Consider the following 142-residue polypeptide: Small ribosomal subunit protein uS12 (142 aa).

This sequence belongs to the universal ribosomal protein uS12 family. In terms of assembly, part of the 30S ribosomal subunit.

With S4 and S5 plays an important role in translational accuracy. Located at the interface of the 30S and 50S subunits. This Methanoculleus marisnigri (strain ATCC 35101 / DSM 1498 / JR1) protein is Small ribosomal subunit protein uS12.